The following is a 191-amino-acid chain: tRNA-specific adenosine deaminase 2 (191 aa).

The CMP/dCMP-type deaminase domain maps to 20–145 (EETEKWMEEA…SVLNIASADL (126 aa)). H71 contacts Zn(2+). Catalysis depends on E73, which acts as the Proton donor. 2 residues coordinate Zn(2+): C107 and C110.

Belongs to the cytidine and deoxycytidylate deaminase family. ADAT2 subfamily. Zn(2+) is required as a cofactor.

It carries out the reaction adenosine(34) in tRNA + H2O + H(+) = inosine(34) in tRNA + NH4(+). Probably participates in deamination of adenosine-34 to inosine in many tRNAs. The sequence is that of tRNA-specific adenosine deaminase 2 (ADAT2) from Homo sapiens (Human).